The primary structure comprises 416 residues: Iron-regulated transcriptional activator AFT2 (416 aa).

Aspartate 53 lines the Zn(2+) pocket. Residues arginine 54, histidine 55, lysine 58, isoleucine 74, glutamate 75, arginine 76, serine 77, aspartate 78, and lysine 81 each coordinate DNA. Histidine 55 contributes to the Zn(2+) binding site. Cysteine 86 serves as a coordination point for Zn(2+). Serine 88 contributes to the DNA binding site. Cysteine 109 contributes to the Zn(2+) binding site. DNA is bound by residues valine 119 and arginine 120. Zn(2+) is bound by residues histidine 133 and histidine 135. Positions 157 and 159 each coordinate DNA. Residues 187–189 (CDC) carry the CDC [2Fe-2S] cluster binding motif motif.

As to quaternary structure, homodimer. Dimerization decreases the DNA-binding activity.

Its subcellular location is the nucleus. With respect to regulation, dimerization via the binding of Fe(2+) or a [2Fe-2S] cluster decreases the DNA-binding activity. Its function is as follows. Transcription factor required for iron homeostasis and resistance to oxidative stress. With AFT1, activates the gene expression in response to low-iron conditions, also called iron regulon. Recognizes the consensus iron-responsive element (Fe-RE) sequence 5'-CACCC-3' in the promoters of target genes. The transcription activation by AFT1 and AFT2 depends on the mitochondrial iron-sulfur protein biosynthesis pathway. In high iron condition, the presence of iron leads to dimerization, which in turn leads to a decrease in DNA affinity. In Saccharomyces cerevisiae (strain ATCC 204508 / S288c) (Baker's yeast), this protein is Iron-regulated transcriptional activator AFT2.